The sequence spans 117 residues: Large ribosomal subunit protein bL20c (117 aa).

Belongs to the bacterial ribosomal protein bL20 family.

It localises to the plastid. The protein localises to the chloroplast. In terms of biological role, binds directly to 23S ribosomal RNA and is necessary for the in vitro assembly process of the 50S ribosomal subunit. It is not involved in the protein synthesizing functions of that subunit. This is Large ribosomal subunit protein bL20c from Eucalyptus globulus subsp. globulus (Tasmanian blue gum).